The sequence spans 152 residues: Ribosomal RNA large subunit methyltransferase H (152 aa).

Residues Leu-71, Gly-101, and 120-125 (LSKLTF) contribute to the S-adenosyl-L-methionine site.

The protein belongs to the RNA methyltransferase RlmH family. Homodimer.

The protein localises to the cytoplasm. It carries out the reaction pseudouridine(1915) in 23S rRNA + S-adenosyl-L-methionine = N(3)-methylpseudouridine(1915) in 23S rRNA + S-adenosyl-L-homocysteine + H(+). Functionally, specifically methylates the pseudouridine at position 1915 (m3Psi1915) in 23S rRNA. The sequence is that of Ribosomal RNA large subunit methyltransferase H from Thermosipho melanesiensis (strain DSM 12029 / CIP 104789 / BI429).